Here is a 71-residue protein sequence, read N- to C-terminus: Guanine nucleotide-binding protein G(I)/G(S)/G(O) subunit gamma-2 (71 aa).

A2 is subject to N-acetylalanine. C68 bears the Cysteine methyl ester mark. C68 is lipidated: S-geranylgeranyl cysteine. The propeptide at 69-71 is removed in mature form; it reads AIL.

Belongs to the G protein gamma family. In terms of assembly, g proteins are composed of 3 units, alpha, beta and gamma. In this context, interacts with GNB2. The heterodimer formed by GNB1 and GNG2 interacts with ARHGEF5. The heterodimer formed by GNB1 and GNG2 interacts with GRK2. Component of the TAS2R14-GNAI1 complex, consisting of TAS2R14, GNAI1, GNB1 and GNG2. Forms complexes with TAS2R14 and G-proteins; these complexes play a role in the perception of bitterness. Component of the TAS2R14-GNAT3 complex, consisting of TAS2R14, GNAT3, GNB1 and GNG2. Component of the TAS2R14-GNAS2 complex, consisting of TAS2R14, GNAS2, GNB1 and GNG2. As to expression, adrenal gland and brain.

The protein resides in the cell membrane. Guanine nucleotide-binding proteins (G proteins) are involved as a modulator or transducer in various transmembrane signaling systems. The beta and gamma chains are required for the GTPase activity, for replacement of GDP by GTP, and for G protein-effector interaction. In Bos taurus (Bovine), this protein is Guanine nucleotide-binding protein G(I)/G(S)/G(O) subunit gamma-2 (GNG2).